A 292-amino-acid polypeptide reads, in one-letter code: Cytidine deaminase (292 aa).

2 consecutive CMP/dCMP-type deaminase domains span residues 47–167 and 186–292; these read TPLK…FGPK and DHQD…YYSL. Position 88-90 (88-90) interacts with substrate; the sequence is NQE. His101 serves as a coordination point for Zn(2+). Glu103 functions as the Proton donor in the catalytic mechanism. 2 residues coordinate Zn(2+): Cys128 and Cys131.

This sequence belongs to the cytidine and deoxycytidylate deaminase family. As to quaternary structure, homodimer. The cofactor is Zn(2+).

It catalyses the reaction cytidine + H2O + H(+) = uridine + NH4(+). It carries out the reaction 2'-deoxycytidine + H2O + H(+) = 2'-deoxyuridine + NH4(+). In terms of biological role, this enzyme scavenges exogenous and endogenous cytidine and 2'-deoxycytidine for UMP synthesis. This is Cytidine deaminase from Haemophilus influenzae (strain PittEE).